The sequence spans 640 residues: 1,4-alpha-glucan branching enzyme GlgB (640 aa).

Aspartate 317 functions as the Nucleophile in the catalytic mechanism. The active-site Proton donor is the glutamate 370.

It belongs to the glycosyl hydrolase 13 family. GlgB subfamily. In terms of assembly, monomer.

The enzyme catalyses Transfers a segment of a (1-&gt;4)-alpha-D-glucan chain to a primary hydroxy group in a similar glucan chain.. Its pathway is glycan biosynthesis; glycogen biosynthesis. Functionally, catalyzes the formation of the alpha-1,6-glucosidic linkages in glycogen by scission of a 1,4-alpha-linked oligosaccharide from growing alpha-1,4-glucan chains and the subsequent attachment of the oligosaccharide to the alpha-1,6 position. In Nitratidesulfovibrio vulgaris (strain ATCC 29579 / DSM 644 / CCUG 34227 / NCIMB 8303 / VKM B-1760 / Hildenborough) (Desulfovibrio vulgaris), this protein is 1,4-alpha-glucan branching enzyme GlgB.